Here is a 571-residue protein sequence, read N- to C-terminus: Urease subunit alpha (571 aa).

The Urease domain occupies 133-571 (GGIDTHVHFI…LPLTQRYFLF (439 aa)). Positions 138, 140, and 221 each coordinate Ni(2+). Residue Lys-221 is modified to N6-carboxylysine. Substrate is bound at residue His-223. Residues His-250 and His-276 each contribute to the Ni(2+) site. The active-site Proton donor is His-324. Asp-364 serves as a coordination point for Ni(2+).

Belongs to the metallo-dependent hydrolases superfamily. Urease alpha subunit family. As to quaternary structure, heterotrimer of UreA (gamma), UreB (beta) and UreC (alpha) subunits. Three heterotrimers associate to form the active enzyme. Requires Ni cation as cofactor. Carboxylation allows a single lysine to coordinate two nickel ions.

The protein localises to the cytoplasm. It catalyses the reaction urea + 2 H2O + H(+) = hydrogencarbonate + 2 NH4(+). The protein operates within nitrogen metabolism; urea degradation; CO(2) and NH(3) from urea (urease route): step 1/1. The polypeptide is Urease subunit alpha (Staphylococcus epidermidis (strain ATCC 35984 / DSM 28319 / BCRC 17069 / CCUG 31568 / BM 3577 / RP62A)).